A 205-amino-acid chain; its full sequence is Iron-sulfur assembly protein 2 (205 aa).

C131, C196, and C198 together coordinate Fe cation.

Belongs to the HesB/IscA family.

The protein localises to the mitochondrion matrix. Involved in the assembly of mitochondrial and cytoplasmic iron-sulfur proteins. Probably involved in the binding of an intermediate of Fe/S cluster assembly. This Schizosaccharomyces pombe (strain 972 / ATCC 24843) (Fission yeast) protein is Iron-sulfur assembly protein 2 (isa2).